We begin with the raw amino-acid sequence, 497 residues long: Mechanosensitive ion channel protein 1, mitochondrial (497 aa).

The N-terminal 86 residues, methionine 1–phenylalanine 86, are a transit peptide targeting the mitochondrion. Transmembrane regions (helical) follow at residues aspartate 152–proline 172, leucine 216–alanine 236, tyrosine 238–tryptophan 258, valine 280–alanine 300, and valine 305–alanine 325.

Belongs to the MscS (TC 1.A.23) family.

Its subcellular location is the mitochondrion membrane. Its function is as follows. Mechanosensitive channel that opens in response to stretch forces in the membrane lipid bilayer. The polypeptide is Mechanosensitive ion channel protein 1, mitochondrial (MSL1) (Arabidopsis thaliana (Mouse-ear cress)).